The following is a 375-amino-acid chain: uncharacterized protein (375 aa).

The segment covering 1–12 has biased composition (basic residues); sequence MAGNKKQVKKNT. Disordered stretches follow at residues 1 to 76 and 119 to 274; these read MAGN…EKKS and KNKN…KEIK. Positions 26–39 are enriched in polar residues; it reads DTSNLDTAVQTSAS. Positions 129–141 are enriched in low complexity; the sequence is TATDGTTTTTNIP. Basic and acidic residues predominate over residues 175–185; sequence DETHSHKEEPK. Low complexity-rich tracts occupy residues 198–212 and 225–241; these read SKQQ…SSSS and PTPT…KSTP. A compositionally biased stretch (basic and acidic residues) spans 256–274; it reads EQPKEKSSPAPVKKEKEIK. 2 helical membrane passes run 299–319 and 327–347; these read VVYK…LVPL and IYSY…TLFI. The disordered stretch occupies residues 355-375; it reads ASKEQKSKSGNKKSTTRKVKA. Over residues 363 to 375 the composition is skewed to basic residues; it reads SGNKKSTTRKVKA.

The protein localises to the membrane. This is an uncharacterized protein from Dictyostelium discoideum (Social amoeba).